Consider the following 821-residue polypeptide: Enhancer of polycomb-like protein 1 (821 aa).

Positions 1–12 (MSSNGGSNTNER) are enriched in polar residues. Disordered regions lie at residues 1–43 (MSSN…TRFR), 427–485 (KAAA…QPAM), and 779–799 (QFLQ…PINP). Low complexity-rich tracts occupy residues 18 to 39 (SGSL…DSGS) and 449 to 465 (EQAA…SSSQ). Polar residues predominate over residues 786-799 (ENGSPNNATMPINP).

The protein belongs to the enhancer of polycomb family. In terms of assembly, component of the NuA4 histone acetyltransferase complex.

Its subcellular location is the nucleus. Component of the NuA4 histone acetyltransferase complex which is involved in transcriptional activation of selected genes principally by acetylation of nucleosomal histone H4 and H2A. The NuA4 complex is also involved in DNA repair. Involved in gene silencing by neighboring heterochromatin, blockage of the silencing spreading along the chromosome, and required for cell cycle progression through G2/M. This Candida glabrata (strain ATCC 2001 / BCRC 20586 / JCM 3761 / NBRC 0622 / NRRL Y-65 / CBS 138) (Yeast) protein is Enhancer of polycomb-like protein 1 (EPL1).